The primary structure comprises 719 residues: Putative ankyrin repeat protein RBE_0319 (719 aa).

9 ANK repeats span residues Val377 to Ser406, Thr408 to Glu438, Asn442 to Lys472, Tyr476 to Gln506, Tyr510 to Glu540, Leu544 to Gln572, Asp576 to Glu605, His609 to Glu639, and Gln642 to Lys672.

The chain is Putative ankyrin repeat protein RBE_0319 from Rickettsia bellii (strain RML369-C).